A 354-amino-acid chain; its full sequence is Methionine import ATP-binding protein MetN (354 aa).

The ABC transporter domain maps to 8-250 (LDHIDITFHQ…PREDLTKDFI (243 aa)). An ATP-binding site is contributed by 42-49 (GYSGAGKS).

The protein belongs to the ABC transporter superfamily. Methionine importer (TC 3.A.1.24) family. The complex is composed of two ATP-binding proteins (MetN), two transmembrane proteins (MetI) and a solute-binding protein (MetQ).

It localises to the cell membrane. It catalyses the reaction L-methionine(out) + ATP + H2O = L-methionine(in) + ADP + phosphate + H(+). It carries out the reaction D-methionine(out) + ATP + H2O = D-methionine(in) + ADP + phosphate + H(+). In terms of biological role, part of the ABC transporter complex MetNIQ involved in methionine import. Responsible for energy coupling to the transport system. This Streptococcus mutans serotype c (strain ATCC 700610 / UA159) protein is Methionine import ATP-binding protein MetN.